We begin with the raw amino-acid sequence, 451 residues long: Midnolin-B (451 aa).

Positions 20 to 94 (MNLNIQSTTG…LTLLPSVEAG (75 aa)) constitute a Ubiquitin-like domain. Disordered regions lie at residues 187–254 (ASCT…RSRK), 331–372 (RNAK…QTEN), and 388–427 (QKRL…EGSL). Low complexity-rich tracts occupy residues 190 to 205 (TPGS…TSST), 237 to 250 (STRG…SPSS), and 336 to 347 (TSPQSTGPQQTT). Residues 363-372 (SGDRLRQTEN) show a composition bias toward basic and acidic residues. Basic residues predominate over residues 388–397 (QKRLRRKARR). Low complexity predominate over residues 413-426 (RTSSNSSTSSGEGS).

The protein resides in the nucleus. The protein localises to the cytoplasm. Its subcellular location is the cytosol. It localises to the nucleolus. Functionally, facilitates ubiquitin-independent proteasomal degradation of polycomb protein CBX4. Plays a role in inhibiting the activity of glucokinase GCK and both glucose-induced and basal insulin secretion. The protein is Midnolin-B (midn-b) of Xenopus laevis (African clawed frog).